The chain runs to 173 residues: Small ribosomal subunit protein uS4c (173 aa).

The S4 RNA-binding domain maps to 94–155 (SRLDSKIYRS…TKLTSELIEK (62 aa)).

Belongs to the universal ribosomal protein uS4 family. In terms of assembly, part of the 30S ribosomal subunit. Contacts protein S5. The interaction surface between S4 and S5 is involved in control of translational fidelity.

Its subcellular location is the plastid. In terms of biological role, one of the primary rRNA binding proteins, it binds directly to 16S rRNA where it nucleates assembly of the body of the 30S subunit. Its function is as follows. With S5 and S12 plays an important role in translational accuracy. The protein is Small ribosomal subunit protein uS4c (rps4) of Helicosporidium sp. subsp. Simulium jonesii (Green alga).